The following is a 179-amino-acid chain: 3-hydroxyanthranilate 3,4-dioxygenase (179 aa).

Arg-47 provides a ligand contact to O2. His-51, Glu-57, and His-96 together coordinate Fe cation. Substrate is bound at residue Glu-57. Substrate contacts are provided by Arg-100 and Glu-110. 4 residues coordinate Fe cation: Cys-125, Cys-128, Cys-162, and Cys-165.

This sequence belongs to the 3-HAO family. Requires Fe(2+) as cofactor.

It carries out the reaction 3-hydroxyanthranilate + O2 = (2Z,4Z)-2-amino-3-carboxymuconate 6-semialdehyde. It participates in cofactor biosynthesis; NAD(+) biosynthesis; quinolinate from L-kynurenine: step 3/3. Its function is as follows. Catalyzes the oxidative ring opening of 3-hydroxyanthranilate to 2-amino-3-carboxymuconate semialdehyde, which spontaneously cyclizes to quinolinate. In Bacillus cereus (strain ATCC 10987 / NRS 248), this protein is 3-hydroxyanthranilate 3,4-dioxygenase.